Here is a 156-residue protein sequence, read N- to C-terminus: MNDNQTVIDLDLQIAVEGFELPSQAELELWVKTALRDTMSEAELTIRIVDVEESQELNSTYRGKDKPTNVLSFPFEAPPGIELPLLGDLVICAAVVKQEAMDQNKPLIAHWAHMVVHGCLHLLGYDHIDDSEAEEMESLETHLIESLGYINPYKEQ.

His117, His121, and His127 together coordinate Zn(2+).

It belongs to the endoribonuclease YbeY family. It depends on Zn(2+) as a cofactor.

It is found in the cytoplasm. In terms of biological role, single strand-specific metallo-endoribonuclease involved in late-stage 70S ribosome quality control and in maturation of the 3' terminus of the 16S rRNA. The protein is Endoribonuclease YbeY of Shewanella halifaxensis (strain HAW-EB4).